The sequence spans 543 residues: Protein SGE1 (543 aa).

Residues 1-8 (MKSTLSLT) are Cytoplasmic-facing. A helical membrane pass occupies residues 9-29 (LCVISLLLTLFLAALDIVIVV). At 30–41 (TLYDTIGIKFHD) the chain is on the extracellular side. The chain crosses the membrane as a helical span at residues 42 to 62 (FGNIGWLVTGYALSNAVFMLL). At 63–79 (WGRLAEILGTKECLMIS) the chain is on the cytoplasmic side. The chain crosses the membrane as a helical span at residues 80–100 (VIVFEIGSLISALSNSMATLI). At 101–103 (SGR) the chain is on the extracellular side. A helical membrane pass occupies residues 104–124 (VVAGFGGSGIESLAFVVGTSI). Residues 125 to 131 (VRENHRG) are Cytoplasmic-facing. Residues 132 to 152 (IMITALAISYVIAEGVGPFIG) traverse the membrane as a helical segment. The Extracellular segment spans residues 153-162 (GAFNEHLSWR). A helical transmembrane segment spans residues 163–183 (WCFYINLPIGAFAFIILAFCN). Topologically, residues 184-227 (TSGEPHQKMWLPSKIKKIMNYDYGELLKASFWKNTFEVLVFKLD) are cytoplasmic. A helical membrane pass occupies residues 228–248 (MVGIILSSAGFTLLMLGLSFG). At 249–255 (GNNFPWN) the chain is on the extracellular side. The chain crosses the membrane as a helical span at residues 256–276 (SGIIICFFTVGPILLLLFCAY). Topologically, residues 277 to 300 (DFHFLSLSGLHYDNKRIKPLLTWN) are cytoplasmic. A helical membrane pass occupies residues 301–321 (IASNCGIFTSSITGFLSCFAY). Over 322–341 (ELQSAYLVQLYQLVFKKKPT) the chain is Extracellular. Residues 342-362 (LASIHLWELSIPAMIATMAIA) form a helical membrane-spanning segment. Residues 363-373 (YLNSKYGIIKP) are Cytoplasmic-facing. Residues 374–394 (AIVFGVLCGIVGSGLFTLING) form a helical membrane-spanning segment. At 395-399 (ELSQS) the chain is on the extracellular side. The chain crosses the membrane as a helical span at residues 400–420 (IGYSILPGIAFGSIFQATLLS). The Cytoplasmic portion of the chain corresponds to 421–443 (SQVQITSDDPDFQNKFIEVTAFN). Residues 444–464 (SFAKSLGFAFGGNMGAMIFTA) form a helical membrane-spanning segment. The Extracellular segment spans residues 465 to 508 (SLKNQMRSSQLNIPQFTSVETLLAYSTEHYDGPQSSLSKFINTA). The helical transmembrane segment at 509 to 529 (IHDVFYCALGCYALSFFFGIF) threads the bilayer. Over 530-543 (TSSKKTTISAKKQQ) the chain is Cytoplasmic.

It belongs to the major facilitator superfamily.

The protein resides in the membrane. Drug export permease. Multi-copy suppressor of loss-of-function mutation of GAL11. Involved specifically in transcription of GAL4-dependent genes. Can link GAL4 with the basal transcription machinery if GAL11 is missing. Confers resistance to 10-N-nonyl acridine orange (NAO) and in general to cationic dyes. This chain is Protein SGE1 (SGE1), found in Saccharomyces cerevisiae (strain ATCC 204508 / S288c) (Baker's yeast).